Here is a 121-residue protein sequence, read N- to C-terminus: MIIVTNTIKVEKGAAEHVIRQFTGANGDGHPTKDIAEVEGFLGFELWHSKPEDKDYEEVVVTSKWESEEAQRNWVKSDSFKKAHGRTKDTREQREDRKGIVGNAIARFEVVHVQNPVIVEK.

Positions 2-101 (IIVTNTIKVE…EQREDRKGIV (100 aa)) constitute an ABM domain. Residue Asn-6 coordinates Fe cation. Residues 76 to 98 (KSDSFKKAHGRTKDTREQREDRK) form a disordered region. Over residues 78-98 (DSFKKAHGRTKDTREQREDRK) the composition is skewed to basic and acidic residues. Position 84 (His-84) interacts with heme.

It belongs to the antibiotic biosynthesis monooxygenase family. Heme-degrading monooxygenase IsdG subfamily. As to quaternary structure, homodimer.

The protein localises to the cytoplasm. It carries out the reaction heme b + 3 reduced [NADPH--hemoprotein reductase] + 3 O2 = biliverdin IXalpha + CO + Fe(2+) + 3 oxidized [NADPH--hemoprotein reductase] + 3 H2O + H(+). Its function is as follows. Allows bacterial pathogens to use the host heme as an iron source. Catalyzes the oxidative degradation of the heme macrocyclic porphyrin ring to the biliverdin in the presence of a suitable electron donor such as ascorbate or NADPH--cytochrome P450 reductase, with subsequent release of free iron. This Listeria innocua serovar 6a (strain ATCC BAA-680 / CLIP 11262) protein is Heme-degrading monooxygenase.